The following is a 366-amino-acid chain: Mitogen-activated protein kinase CPK1 (366 aa).

The region spanning 17 to 302 is the Protein kinase domain; sequence KLEEIVGEGA…SPSKRITVEE (286 aa). ATP-binding positions include 22-30 and Lys45; that span reads VGEGAYGLV. Asp140 functions as the Proton acceptor in the catalytic mechanism. Thr181 bears the Phosphothreonine mark. The TXY motif lies at 181-183; sequence TEY. At Tyr183 the chain carries Phosphotyrosine.

The protein belongs to the protein kinase superfamily. CMGC Ser/Thr protein kinase family. MAP kinase subfamily. Mg(2+) is required as a cofactor. Dually phosphorylated on Thr-181 and Tyr-183, which activates the enzyme.

The catalysed reaction is L-seryl-[protein] + ATP = O-phospho-L-seryl-[protein] + ADP + H(+). It carries out the reaction L-threonyl-[protein] + ATP = O-phospho-L-threonyl-[protein] + ADP + H(+). Its activity is regulated as follows. Activated by tyrosine and threonine phosphorylation. In terms of biological role, responds to activation by environmental stress by phosphorylating downstream targets. This is Mitogen-activated protein kinase CPK1 (CPK1) from Cryptococcus neoformans var. neoformans serotype D (strain B-3501A) (Filobasidiella neoformans).